Here is a 248-residue protein sequence, read N- to C-terminus: 14-3-3-like protein 1 (248 aa).

It belongs to the 14-3-3 family. Interacts with daf-16 and sir-2.1. Interacts with atgl-1. Interacts with hcf-1.

The protein localises to the cytoplasm. It localises to the nucleus. Its function is as follows. Required to modulate lifespan, in concert with hcf-1, acting redundantly with 14-3-3-like protein ftt-2. This is 14-3-3-like protein 1 (par-5) from Caenorhabditis elegans.